The primary structure comprises 94 residues: Putative pterin-4-alpha-carbinolamine dehydratase (94 aa).

The protein belongs to the pterin-4-alpha-carbinolamine dehydratase family.

The catalysed reaction is (4aS,6R)-4a-hydroxy-L-erythro-5,6,7,8-tetrahydrobiopterin = (6R)-L-erythro-6,7-dihydrobiopterin + H2O. The protein is Putative pterin-4-alpha-carbinolamine dehydratase of Mycobacterium avium (strain 104).